The chain runs to 611 residues: MTDVPSPFDPKAFVRSLTQRPGVYRMVDGRGEVLYVGKARNLKKRVASYFTRSRKSARIELMLTQVQDIQVTVTHTEAEALILENTLIKELRPRYNVLLRDDKSYPWIYLSSHQDFPRLSFHRGARKGPGRWFGPFPSGHAVRETLNTLQKVFRIRQCQDSFFSNRSRPCLQHQIKRCTAPCVGYISREAYQEDVRHAVLFLEGRSNQVIEELGARMEAASERLEFEAAAQYRDRIQALQAVQERQYIVGEKGDLDVIACVSDGVTACVTVFFFRQGRNLGNKVFYPRIPEGADEAEVLAAFLARYYIGRKAPPELVISHTIPEQKVLGEALSRESGHRVRVTHSVRKERRRWLEMALTNARHALTARTSTQAMALHRLEALQDALQLPALPERIECFDISHTRGEATVAACVVFNQDGPLKSDYRRFNIRGITPGDDYAAMRQALSRRYQRLKKGEGVLPDILLIDGGKGQVAQAEAVLEELQVDDVYLVGIAKGPERRPGEETLILSDEDGREKTLGPDAPALQLLQQVRDEAHRFAIAGHRQQRGKARTRSALEDIPGLGPKRRQALLRHFGGLKAVARAGVEDLARTPGISRALAQKVYDHYHGDSG.

Residues 19 to 97 (QRPGVYRMVD…IKELRPRYNV (79 aa)) form the GIY-YIG domain. A UVR domain is found at 207–242 (NQVIEELGARMEAASERLEFEAAAQYRDRIQALQAV).

It belongs to the UvrC family. As to quaternary structure, interacts with UvrB in an incision complex.

Its subcellular location is the cytoplasm. Its function is as follows. The UvrABC repair system catalyzes the recognition and processing of DNA lesions. UvrC both incises the 5' and 3' sides of the lesion. The N-terminal half is responsible for the 3' incision and the C-terminal half is responsible for the 5' incision. This is UvrABC system protein C from Alkalilimnicola ehrlichii (strain ATCC BAA-1101 / DSM 17681 / MLHE-1).